The primary structure comprises 574 residues: Arginine--tRNA ligase (574 aa).

A 'HIGH' region motif is present at residues 126 to 136 (PNIAKRMHVGH).

It belongs to the class-I aminoacyl-tRNA synthetase family. Monomer.

Its subcellular location is the cytoplasm. It carries out the reaction tRNA(Arg) + L-arginine + ATP = L-arginyl-tRNA(Arg) + AMP + diphosphate. This chain is Arginine--tRNA ligase, found in Chloroflexus aggregans (strain MD-66 / DSM 9485).